We begin with the raw amino-acid sequence, 352 residues long: uncharacterized protein (352 aa).

The first 22 residues, Met1–Ala22, serve as a signal peptide directing secretion.

The protein belongs to the bacterial solute-binding protein 1 family. WtpA subfamily.

This is an uncharacterized protein from Staphylothermus marinus (strain ATCC 43588 / DSM 3639 / JCM 9404 / F1).